The following is a 419-amino-acid chain: MHFVDEAFNEVFAGNGGHGIVAFRREKYVAFGGPAGGNGGNGGSVIFVGDKGENTLLKLKYQKHLKAPHGINGKNKGQNGANAPHLYVKVPLGTVFYTADNKFLGEILYDQQTLVIAKGGKGGKGNKALATFKNQAPSYSEKGDLGESFKIKTELKVLADIGLLGFPSVGKSSLISAISKAQPKVASYPFTTIKPHLGVVEVDGFSFVVADLPGLIENAHLGCGMGIQFLKHIERCRVLVHILSMESSNPYQDFQTLNQELKQYNPQLLLKKQIIVTNKMDLPDSLKKLTLLKQKIKGQPIIPLSLVSFDNLEILKYKMSSFLQNTPLEVNPNNNNDFKLYTLTDNLKTISVIKESDSVFVVSGNQVEIFFHRTDFNNEESVKRFNRILKKIGMEEQLQKKGAKPGDQVKICDRLFDFL.

One can recognise an Obg domain in the interval 1–158; it reads MHFVDEAFNE…FKIKTELKVL (158 aa). Positions 159–324 constitute an OBG-type G domain; that stretch reads ADIGLLGFPS…LKYKMSSFLQ (166 aa). GTP-binding positions include 165-172, 190-194, 211-214, 278-281, and 305-307; these read GFPSVGKS, FTTIK, DLPG, NKMD, and SLV. Positions 172 and 192 each coordinate Mg(2+). Residues 342–419 form the OCT domain; that stretch reads TLTDNLKTIS…KICDRLFDFL (78 aa).

It belongs to the TRAFAC class OBG-HflX-like GTPase superfamily. OBG GTPase family. In terms of assembly, monomer. The cofactor is Mg(2+).

The protein resides in the cytoplasm. Functionally, an essential GTPase which binds GTP, GDP and possibly (p)ppGpp with moderate affinity, with high nucleotide exchange rates and a fairly low GTP hydrolysis rate. Plays a role in control of the cell cycle, stress response, ribosome biogenesis and in those bacteria that undergo differentiation, in morphogenesis control. The chain is GTPase Obg from Aster yellows witches'-broom phytoplasma (strain AYWB).